A 36-amino-acid chain; its full sequence is Kappa-actitoxin-Avd6a (36 aa).

A ShKT domain is found at 2–36 (CKDNFAAATCKHVKENKNCGSQKYATNCAKTCGKC). 3 disulfide bridges follow: C2/C36, C11/C29, and C20/C33. Residues 24 to 25 (KY) are crucial for binding to potassium channels.

Belongs to the sea anemone type 1 potassium channel toxin family. Type 1b subfamily.

It is found in the secreted. The protein localises to the nematocyst. In terms of biological role, blocks voltage-gated potassium channels Kv1.2/KCNA2 (IC(50)=140 nM). The protein is Kappa-actitoxin-Avd6a of Anemonia sulcata (Mediterranean snakelocks sea anemone).